The chain runs to 195 residues: Coagulogen (195 aa).

The N-terminal stretch at 1 to 20 (MEKKLLGIAILFVTVVSVLA) is a signal peptide. Cystine bridges form between cysteine 28–cysteine 188, cysteine 30–cysteine 115, cysteine 80–cysteine 182, cysteine 85–cysteine 141, cysteine 95–cysteine 189, cysteine 108–cysteine 161, cysteine 147–cysteine 191, and cysteine 155–cysteine 193.

It belongs to the coagulin family. As to quaternary structure, coagulogen is cleaved after Arg-38 and Arg-66 by a clotting enzyme contained in the hemocyte and activated by a bacterial endotoxin (lipopolysaccharide). This cleavage releases the peptide C and leaves 2 chains of coagulin, A and B, linked by two disulfide bonds. Coagulin molecules interlink to form a gel. In terms of tissue distribution, hemolymph.

The protein resides in the secreted. Functionally, coagulogen is a gel-forming protein of hemolymph; it hinders the spread of invaders by immobilizing them. The protein is Coagulogen of Limulus polyphemus (Atlantic horseshoe crab).